We begin with the raw amino-acid sequence, 589 residues long: ATP-dependent lipid A-core flippase (589 aa).

6 helical membrane passes run 37–57 (ALAI…PALL), 72–92 (LWLV…SGFL), 151–171 (IMKL…LVYL), 173–193 (WKLM…IQVL), 260–280 (SAIT…IALL), and 286–306 (TTTV…IAPV). Residues 37 to 318 (ALAIGATIVA…LSDAATPVTR (282 aa)) form the ABC transmembrane type-1 domain. The region spanning 350 to 584 (IEFADVSVIY…NGAYAHLYRL (235 aa)) is the ABC transporter domain. ATP is bound at residue 384 to 391 (GASGSGKT).

Belongs to the ABC transporter superfamily. Lipid exporter (TC 3.A.1.106) family. In terms of assembly, homodimer.

The protein resides in the cell inner membrane. It catalyses the reaction ATP + H2O + lipid A-core oligosaccharideSide 1 = ADP + phosphate + lipid A-core oligosaccharideSide 2.. Involved in lipopolysaccharide (LPS) biosynthesis. Translocates lipid A-core from the inner to the outer leaflet of the inner membrane. Transmembrane domains (TMD) form a pore in the inner membrane and the ATP-binding domain (NBD) is responsible for energy generation. In Polaromonas sp. (strain JS666 / ATCC BAA-500), this protein is ATP-dependent lipid A-core flippase.